We begin with the raw amino-acid sequence, 419 residues long: Gamma-glutamyl phosphate reductase (419 aa).

This sequence belongs to the gamma-glutamyl phosphate reductase family.

It is found in the cytoplasm. It catalyses the reaction L-glutamate 5-semialdehyde + phosphate + NADP(+) = L-glutamyl 5-phosphate + NADPH + H(+). It functions in the pathway amino-acid biosynthesis; L-proline biosynthesis; L-glutamate 5-semialdehyde from L-glutamate: step 2/2. Its function is as follows. Catalyzes the NADPH-dependent reduction of L-glutamate 5-phosphate into L-glutamate 5-semialdehyde and phosphate. The product spontaneously undergoes cyclization to form 1-pyrroline-5-carboxylate. This is Gamma-glutamyl phosphate reductase from Maridesulfovibrio salexigens (strain ATCC 14822 / DSM 2638 / NCIMB 8403 / VKM B-1763) (Desulfovibrio salexigens).